The following is a 225-amino-acid chain: Potassium-transporting ATPase KdpC subunit (225 aa).

A helical transmembrane segment spans residues 18–38 (ALLVLTVVTGIVYPLVVTGVA). The segment at 134-161 (NSVPGHPVRPEDVPADAVTSSGSGLDPD) is disordered.

It belongs to the KdpC family. In terms of assembly, the system is composed of three essential subunits: KdpA, KdpB and KdpC.

It localises to the cell membrane. Part of the high-affinity ATP-driven potassium transport (or Kdp) system, which catalyzes the hydrolysis of ATP coupled with the electrogenic transport of potassium into the cytoplasm. This subunit acts as a catalytic chaperone that increases the ATP-binding affinity of the ATP-hydrolyzing subunit KdpB by the formation of a transient KdpB/KdpC/ATP ternary complex. This is Potassium-transporting ATPase KdpC subunit from Streptomyces coelicolor (strain ATCC BAA-471 / A3(2) / M145).